Here is a 275-residue protein sequence, read N- to C-terminus: Phosphate import ATP-binding protein PstB 3 (275 aa).

A disordered region spans residues 1-26 (MATQETDDSLISTDVQTDATERGDQP). Residues 9–18 (SLISTDVQTD) show a composition bias toward polar residues. The 240-residue stretch at 31–270 (VETKHLDVHY…PEDDRVEDYI (240 aa)) folds into the ABC transporter domain. An ATP-binding site is contributed by 63-70 (GPSGCGKS).

The protein belongs to the ABC transporter superfamily. Phosphate importer (TC 3.A.1.7) family. The complex is composed of two ATP-binding proteins (PstB), two transmembrane proteins (PstC and PstA) and a solute-binding protein (PstS).

The protein localises to the cell membrane. It catalyses the reaction phosphate(out) + ATP + H2O = ADP + 2 phosphate(in) + H(+). Part of the ABC transporter complex PstSACB involved in phosphate import. Responsible for energy coupling to the transport system. The polypeptide is Phosphate import ATP-binding protein PstB 3 (Natronomonas pharaonis (strain ATCC 35678 / DSM 2160 / CIP 103997 / JCM 8858 / NBRC 14720 / NCIMB 2260 / Gabara) (Halobacterium pharaonis)).